Reading from the N-terminus, the 759-residue chain is 5-methyltetrahydropteroyltriglutamate--homocysteine methyltransferase (759 aa).

The span at 1–16 shows a compositional bias: polar residues; that stretch reads MTQPVRRQPFTATITG. The disordered stretch occupies residues 1–22; that stretch reads MTQPVRRQPFTATITGSPRIGP. Residues 24–27 and K118 contribute to the 5-methyltetrahydropteroyltri-L-glutamate site; that span reads RELK. Residues 437-439 and E490 each bind L-homocysteine; that span reads IGS. L-methionine-binding positions include 437 to 439 and E490; that span reads IGS. Residues 521–522 and W567 contribute to the 5-methyltetrahydropteroyltri-L-glutamate site; that span reads RC. An L-homocysteine-binding site is contributed by D605. Residue D605 coordinates L-methionine. E611 lines the 5-methyltetrahydropteroyltri-L-glutamate pocket. Residues H647, C649, and E671 each contribute to the Zn(2+) site. H700 (proton donor) is an active-site residue. Position 732 (C732) interacts with Zn(2+).

The protein belongs to the vitamin-B12 independent methionine synthase family. It depends on Zn(2+) as a cofactor.

The catalysed reaction is 5-methyltetrahydropteroyltri-L-glutamate + L-homocysteine = tetrahydropteroyltri-L-glutamate + L-methionine. It participates in amino-acid biosynthesis; L-methionine biosynthesis via de novo pathway; L-methionine from L-homocysteine (MetE route): step 1/1. Functionally, catalyzes the transfer of a methyl group from 5-methyltetrahydrofolate to homocysteine resulting in methionine formation. The polypeptide is 5-methyltetrahydropteroyltriglutamate--homocysteine methyltransferase (Mycobacterium tuberculosis (strain ATCC 25177 / H37Ra)).